The following is a 508-amino-acid chain: ATP synthase subunit alpha, chloroplastic (508 aa).

170–177 (GDRQTGKT) provides a ligand contact to ATP.

Belongs to the ATPase alpha/beta chains family. In terms of assembly, F-type ATPases have 2 components, F(1) - the catalytic core - and F(0) - the membrane proton channel. F(1) has five subunits: alpha(3), beta(3), gamma(1), delta(1), epsilon(1). F(0) has four main subunits: a(1), b(1), b'(1) and c(10-14). The alpha and beta chains form an alternating ring which encloses part of the gamma chain. F(1) is attached to F(0) by a central stalk formed by the gamma and epsilon chains, while a peripheral stalk is formed by the delta, b and b' chains.

It localises to the plastid. The protein localises to the chloroplast thylakoid membrane. It carries out the reaction ATP + H2O + 4 H(+)(in) = ADP + phosphate + 5 H(+)(out). F(1)F(0) ATP synthase produces ATP from ADP in the presence of a proton or sodium gradient. F-type ATPases consist of two structural domains, F(1) containing the extramembraneous catalytic core and F(0) containing the membrane proton channel, linked together by a central stalk and a peripheral stalk. During catalysis, ATP synthesis in the catalytic domain of F(1) is coupled via a rotary mechanism of the central stalk subunits to proton translocation. Its function is as follows. The alpha chain is a regulatory subunit. The sequence is that of ATP synthase subunit alpha, chloroplastic from Chlamydomonas reinhardtii (Chlamydomonas smithii).